The following is a 95-amino-acid chain: Cell division topological specificity factor (95 aa).

Belongs to the MinE family.

Prevents the cell division inhibition by proteins MinC and MinD at internal division sites while permitting inhibition at polar sites. This ensures cell division at the proper site by restricting the formation of a division septum at the midpoint of the long axis of the cell. This chain is Cell division topological specificity factor, found in Synechococcus sp. (strain CC9902).